A 263-amino-acid chain; its full sequence is MQLLTVTKPMFIPFIVAGDPRPDITIELALTLQEAGADILELGVPYSDPLADGPIIQRAAKRALRQQMTLKKAIELVPEMRKKGVKIPIILFTYYNPVLQLGEESFFALARKNEVNGILIPDLPFEESELIRKLGEATGIPLISLVAPTSKKRIEMIASNAQGFLYCVSSLGVTGVRDTLPETLNDFLTEVKRHSRVPVVVGFGISTSEQVSMLKNYCDGVVIGSALVQKIEQLNDLLQTEEKKEEALAEFRRYARSLTAPLR.

Active-site proton acceptor residues include Glu-41 and Asp-52.

The protein belongs to the TrpA family. Tetramer of two alpha and two beta chains.

The enzyme catalyses (1S,2R)-1-C-(indol-3-yl)glycerol 3-phosphate + L-serine = D-glyceraldehyde 3-phosphate + L-tryptophan + H2O. The protein operates within amino-acid biosynthesis; L-tryptophan biosynthesis; L-tryptophan from chorismate: step 5/5. Its function is as follows. The alpha subunit is responsible for the aldol cleavage of indoleglycerol phosphate to indole and glyceraldehyde 3-phosphate. This chain is Tryptophan synthase alpha chain, found in Geobacillus sp. (strain WCH70).